We begin with the raw amino-acid sequence, 415 residues long: Serine hydroxymethyltransferase (415 aa).

(6S)-5,6,7,8-tetrahydrofolate is bound by residues L115 and 119 to 121; that span reads GHL. Position 224 is an N6-(pyridoxal phosphate)lysine (K224). (6S)-5,6,7,8-tetrahydrofolate is bound at residue 348-350; that stretch reads SPF.

The protein belongs to the SHMT family. Homodimer. The cofactor is pyridoxal 5'-phosphate.

It is found in the cytoplasm. The enzyme catalyses (6R)-5,10-methylene-5,6,7,8-tetrahydrofolate + glycine + H2O = (6S)-5,6,7,8-tetrahydrofolate + L-serine. It functions in the pathway one-carbon metabolism; tetrahydrofolate interconversion. It participates in amino-acid biosynthesis; glycine biosynthesis; glycine from L-serine: step 1/1. Functionally, catalyzes the reversible interconversion of serine and glycine with tetrahydrofolate (THF) serving as the one-carbon carrier. This reaction serves as the major source of one-carbon groups required for the biosynthesis of purines, thymidylate, methionine, and other important biomolecules. Also exhibits THF-independent aldolase activity toward beta-hydroxyamino acids, producing glycine and aldehydes, via a retro-aldol mechanism. The polypeptide is Serine hydroxymethyltransferase (Latilactobacillus sakei subsp. sakei (strain 23K) (Lactobacillus sakei subsp. sakei)).